The following is a 198-amino-acid chain: HTH-type transcriptional regulator BetI (198 aa).

The region spanning 8–68 (KIRRPQLVSA…ETMRDILRQL (61 aa)) is the HTH tetR-type domain. The segment at residues 31–50 (SVSLISQEAGVSSGIINHYF) is a DNA-binding region (H-T-H motif).

The protein operates within amine and polyamine biosynthesis; betaine biosynthesis via choline pathway [regulation]. Its function is as follows. Repressor involved in the biosynthesis of the osmoprotectant glycine betaine. It represses transcription of the choline transporter BetT and the genes of BetAB involved in the synthesis of glycine betaine. The polypeptide is HTH-type transcriptional regulator BetI (Vibrio vulnificus (strain YJ016)).